The chain runs to 131 residues: ER membrane protein complex subunit 5 (131 aa).

Over 1–3 (MAP) the chain is Cytoplasmic. Residues 4-22 (SLWKGLVGIGLFALAHAAF) traverse the membrane as a helical segment. The Lumenal segment spans residues 23–43 (SAAQHRSYMRLTEKEDESLPI). The helical transmembrane segment at 44 to 63 (DIVLQTLLAFAVTCYGIVHI) threads the bilayer. The Cytoplasmic segment spans residues 64-131 (AGEFKDMDAT…KLRKLESLRR (68 aa)). Phosphoserine is present on serine 120.

The protein belongs to the membrane magnesium transporter (TC 1.A.67) family. In terms of assembly, component of the ER membrane protein complex (EMC).

The protein resides in the endoplasmic reticulum membrane. The protein localises to the golgi apparatus membrane. It is found in the early endosome membrane. In terms of biological role, part of the endoplasmic reticulum membrane protein complex (EMC) that enables the energy-independent insertion into endoplasmic reticulum membranes of newly synthesized membrane proteins. Preferentially accommodates proteins with transmembrane domains that are weakly hydrophobic or contain destabilizing features such as charged and aromatic residues. Involved in the cotranslational insertion of multi-pass membrane proteins in which stop-transfer membrane-anchor sequences become ER membrane spanning helices. It is also required for the post-translational insertion of tail-anchored/TA proteins in endoplasmic reticulum membranes. By mediating the proper cotranslational insertion of N-terminal transmembrane domains in an N-exo topology, with translocated N-terminus in the lumen of the ER, controls the topology of multi-pass membrane proteins like the G protein-coupled receptors. By regulating the insertion of various proteins in membranes, it is indirectly involved in many cellular processes. May be involved in Mg(2+) transport. The protein is ER membrane protein complex subunit 5 of Homo sapiens (Human).